We begin with the raw amino-acid sequence, 460 residues long: Bifunctional protein GlmU (460 aa).

The interval 1–229 (MTNYAIILAA…FNESLGVNDR (229 aa)) is pyrophosphorylase. UDP-N-acetyl-alpha-D-glucosamine is bound by residues 8–11 (LAAG), Lys-22, Gln-72, and 77–78 (GT). Mg(2+) is bound at residue Asp-102. UDP-N-acetyl-alpha-D-glucosamine contacts are provided by Gly-139, Glu-154, Asn-169, and Asn-227. Asn-227 is a binding site for Mg(2+). Positions 230–250 (VALATAETVMRQRITQKHMVN) are linker. The segment at 251 to 460 (GVTFQNPETV…RLAHHPSRSK (210 aa)) is N-acetyltransferase. The UDP-N-acetyl-alpha-D-glucosamine site is built by Arg-332 and Lys-350. His-362 functions as the Proton acceptor in the catalytic mechanism. UDP-N-acetyl-alpha-D-glucosamine-binding residues include Tyr-365 and Asn-376. Acetyl-CoA is bound by residues Ala-379, 385 to 386 (NY), Ser-404, Ala-422, and Arg-439.

The protein in the N-terminal section; belongs to the N-acetylglucosamine-1-phosphate uridyltransferase family. In the C-terminal section; belongs to the transferase hexapeptide repeat family. Homotrimer. Requires Mg(2+) as cofactor.

The protein resides in the cytoplasm. It carries out the reaction alpha-D-glucosamine 1-phosphate + acetyl-CoA = N-acetyl-alpha-D-glucosamine 1-phosphate + CoA + H(+). The enzyme catalyses N-acetyl-alpha-D-glucosamine 1-phosphate + UTP + H(+) = UDP-N-acetyl-alpha-D-glucosamine + diphosphate. The protein operates within nucleotide-sugar biosynthesis; UDP-N-acetyl-alpha-D-glucosamine biosynthesis; N-acetyl-alpha-D-glucosamine 1-phosphate from alpha-D-glucosamine 6-phosphate (route II): step 2/2. Its pathway is nucleotide-sugar biosynthesis; UDP-N-acetyl-alpha-D-glucosamine biosynthesis; UDP-N-acetyl-alpha-D-glucosamine from N-acetyl-alpha-D-glucosamine 1-phosphate: step 1/1. It participates in bacterial outer membrane biogenesis; LPS lipid A biosynthesis. Its function is as follows. Catalyzes the last two sequential reactions in the de novo biosynthetic pathway for UDP-N-acetylglucosamine (UDP-GlcNAc). The C-terminal domain catalyzes the transfer of acetyl group from acetyl coenzyme A to glucosamine-1-phosphate (GlcN-1-P) to produce N-acetylglucosamine-1-phosphate (GlcNAc-1-P), which is converted into UDP-GlcNAc by the transfer of uridine 5-monophosphate (from uridine 5-triphosphate), a reaction catalyzed by the N-terminal domain. This is Bifunctional protein GlmU from Streptococcus pyogenes serotype M18 (strain MGAS8232).